We begin with the raw amino-acid sequence, 153 residues long: Prophage Rz endopeptidase RzpD (153 aa).

Functionally, necessary for host cell lysis. It is believed to code for an endopeptidase that cleaves the amino-carboxyl cross-link between the diaminopimelic acid and D-alanine residues in the murein component of the bacterial cell wall. The chain is Prophage Rz endopeptidase RzpD (rzpD) from Escherichia coli (strain K12).